The chain runs to 284 residues: Bifunctional protein FolD (284 aa).

Residues 164-166 (GRS) and Ser189 each bind NADP(+).

The protein belongs to the tetrahydrofolate dehydrogenase/cyclohydrolase family. In terms of assembly, homodimer.

The enzyme catalyses (6R)-5,10-methylene-5,6,7,8-tetrahydrofolate + NADP(+) = (6R)-5,10-methenyltetrahydrofolate + NADPH. It carries out the reaction (6R)-5,10-methenyltetrahydrofolate + H2O = (6R)-10-formyltetrahydrofolate + H(+). The protein operates within one-carbon metabolism; tetrahydrofolate interconversion. Functionally, catalyzes the oxidation of 5,10-methylenetetrahydrofolate to 5,10-methenyltetrahydrofolate and then the hydrolysis of 5,10-methenyltetrahydrofolate to 10-formyltetrahydrofolate. The polypeptide is Bifunctional protein FolD (Listeria welshimeri serovar 6b (strain ATCC 35897 / DSM 20650 / CCUG 15529 / CIP 8149 / NCTC 11857 / SLCC 5334 / V8)).